Consider the following 421-residue polypeptide: C2H2 type master regulator of conidiophore development brlA (421 aa).

2 consecutive C2H2-type zinc fingers follow at residues 309–333 and 339–364; these read FKCKEPGCKGRFKRQEHLKRHMKSH and HVCWVPGCERAFSRSDNLNAHYTKTH. The disordered stretch occupies residues 379-421; that stretch reads ESSPDYDPDFRGQLTPDGLPIRGSTLDDPMPNSREYSVDGLDD.

The protein localises to the nucleus. BrlA, abaA and wetA are pivotal regulators of conidiophore development and conidium maturation. They act individually and together to regulate their own expression and that of numerous other sporulation-specific genes. Binds promoters of target genes at brlA response elements (BREs) containing the conserved sequence 5'-(C/A)(A/G)AGGG(G/A)-3'. Required for conidiophores formation. Controls expression of abaA. The protein is C2H2 type master regulator of conidiophore development brlA of Aspergillus oryzae (strain ATCC 42149 / RIB 40) (Yellow koji mold).